The sequence spans 676 residues: Transketolase 7 (676 aa).

Residue histidine 36 coordinates substrate. Thiamine diphosphate contacts are provided by residues histidine 76 and 125 to 127 (GPL). Aspartate 166 is a binding site for Mg(2+). The thiamine diphosphate site is built by glycine 167 and asparagine 196. The Mg(2+) site is built by asparagine 196 and isoleucine 198. Residues histidine 273, arginine 367, and serine 394 each coordinate substrate. Thiamine diphosphate is bound at residue histidine 273. 2 residues coordinate thiamine diphosphate: glutamate 421 and phenylalanine 448. The active-site Proton donor is the glutamate 421. Positions 472, 480, and 531 each coordinate substrate.

The protein belongs to the transketolase family. As to quaternary structure, homodimer. Mg(2+) is required as a cofactor. The cofactor is Ca(2+). It depends on Mn(2+) as a cofactor. Requires Co(2+) as cofactor. Thiamine diphosphate serves as cofactor. In terms of tissue distribution, leaves and roots.

It carries out the reaction D-sedoheptulose 7-phosphate + D-glyceraldehyde 3-phosphate = aldehydo-D-ribose 5-phosphate + D-xylulose 5-phosphate. Its function is as follows. Could be involved in the conversion of sugars, which are a major phenomenon in the rehydration process. In terms of biological role, catalyzes the transfer of a two-carbon ketol group from a ketose donor to an aldose acceptor, via a covalent intermediate with the cofactor thiamine pyrophosphate. The protein is Transketolase 7 (TKT7) of Craterostigma plantagineum (Blue gem).